Reading from the N-terminus, the 122-residue chain is Large ribosomal subunit protein uL14 (122 aa).

This sequence belongs to the universal ribosomal protein uL14 family. In terms of assembly, part of the 50S ribosomal subunit. Forms a cluster with proteins L3 and L19. In the 70S ribosome, L14 and L19 interact and together make contacts with the 16S rRNA in bridges B5 and B8.

Binds to 23S rRNA. Forms part of two intersubunit bridges in the 70S ribosome. The sequence is that of Large ribosomal subunit protein uL14 from Streptococcus agalactiae serotype Ia (strain ATCC 27591 / A909 / CDC SS700).